A 336-amino-acid polypeptide reads, in one-letter code: Holliday junction branch migration complex subunit RuvB (336 aa).

A compositionally biased stretch (basic and acidic residues) spans 1–11; the sequence is MDDDKLLSGDK. Positions 1–21 are disordered; it reads MDDDKLLSGDKADDEEASLEK. The tract at residues 1 to 184 is large ATPase domain (RuvB-L); that stretch reads MDDDKLLSGD…FGIVEHMAYY (184 aa). Residues Leu23, Arg24, Gly65, Lys68, Thr69, Thr70, 131–133, Arg174, Tyr184, and Arg221 contribute to the ATP site; that span reads EDF. Mg(2+) is bound at residue Thr69. A small ATPAse domain (RuvB-S) region spans residues 185-255; the sequence is EVADLEDIVK…IVARSLTYLR (71 aa). The interval 258–336 is head domain (RuvB-H); it reads DAGLDETDNK…HLGFPYPENK (79 aa). Arg313 and Arg318 together coordinate DNA.

Belongs to the RuvB family. As to quaternary structure, homohexamer. Forms an RuvA(8)-RuvB(12)-Holliday junction (HJ) complex. HJ DNA is sandwiched between 2 RuvA tetramers; dsDNA enters through RuvA and exits via RuvB. An RuvB hexamer assembles on each DNA strand where it exits the tetramer. Each RuvB hexamer is contacted by two RuvA subunits (via domain III) on 2 adjacent RuvB subunits; this complex drives branch migration. In the full resolvosome a probable DNA-RuvA(4)-RuvB(12)-RuvC(2) complex forms which resolves the HJ.

It localises to the cytoplasm. The catalysed reaction is ATP + H2O = ADP + phosphate + H(+). Its function is as follows. The RuvA-RuvB-RuvC complex processes Holliday junction (HJ) DNA during genetic recombination and DNA repair, while the RuvA-RuvB complex plays an important role in the rescue of blocked DNA replication forks via replication fork reversal (RFR). RuvA specifically binds to HJ cruciform DNA, conferring on it an open structure. The RuvB hexamer acts as an ATP-dependent pump, pulling dsDNA into and through the RuvAB complex. RuvB forms 2 homohexamers on either side of HJ DNA bound by 1 or 2 RuvA tetramers; 4 subunits per hexamer contact DNA at a time. Coordinated motions by a converter formed by DNA-disengaged RuvB subunits stimulates ATP hydrolysis and nucleotide exchange. Immobilization of the converter enables RuvB to convert the ATP-contained energy into a lever motion, pulling 2 nucleotides of DNA out of the RuvA tetramer per ATP hydrolyzed, thus driving DNA branch migration. The RuvB motors rotate together with the DNA substrate, which together with the progressing nucleotide cycle form the mechanistic basis for DNA recombination by continuous HJ branch migration. Branch migration allows RuvC to scan DNA until it finds its consensus sequence, where it cleaves and resolves cruciform DNA. This chain is Holliday junction branch migration complex subunit RuvB, found in Lactiplantibacillus plantarum (strain ATCC BAA-793 / NCIMB 8826 / WCFS1) (Lactobacillus plantarum).